Consider the following 97-residue polypeptide: Biogenesis of lysosome-related organelles complex 1 subunit SNN1 (97 aa).

Residues 45–97 (VVRLKQIRNLLKEEQEYYNEEEGLGVERERLEELELRVEKLTQKYKKLLADCV) adopt a coiled-coil conformation.

This sequence belongs to the SNAPIN family. Component of the biogenesis of lysosome-related organelles complex-1 (BLOC-1).

The protein localises to the endosome. Component of the biogenesis of lysosome-related organelles complex-1 (BLOC-1), a complex involved in endosomal cargo sorting. In Lachancea thermotolerans (strain ATCC 56472 / CBS 6340 / NRRL Y-8284) (Yeast), this protein is Biogenesis of lysosome-related organelles complex 1 subunit SNN1 (SNN1).